The primary structure comprises 382 residues: S-adenosylmethionine synthase (382 aa).

Residue H16 participates in ATP binding. Mg(2+) is bound at residue D18. Residue E44 coordinates K(+). L-methionine is bound by residues E57 and Q100. A flexible loop region spans residues 100-110; that stretch reads QSPDIAQGVDN. ATP is bound by residues 165–167, 231–232, D240, 246–247, and K267; these read DAK, RF, and RK. Position 240 (D240) interacts with L-methionine. K271 contributes to the L-methionine binding site.

Belongs to the AdoMet synthase family. Homotetramer; dimer of dimers. It depends on Mg(2+) as a cofactor. K(+) serves as cofactor.

It is found in the cytoplasm. It carries out the reaction L-methionine + ATP + H2O = S-adenosyl-L-methionine + phosphate + diphosphate. The protein operates within amino-acid biosynthesis; S-adenosyl-L-methionine biosynthesis; S-adenosyl-L-methionine from L-methionine: step 1/1. Functionally, catalyzes the formation of S-adenosylmethionine (AdoMet) from methionine and ATP. The overall synthetic reaction is composed of two sequential steps, AdoMet formation and the subsequent tripolyphosphate hydrolysis which occurs prior to release of AdoMet from the enzyme. This is S-adenosylmethionine synthase from Legionella pneumophila subsp. pneumophila (strain Philadelphia 1 / ATCC 33152 / DSM 7513).